The chain runs to 496 residues: Iroquois-class homeodomain protein irx-4-A (496 aa).

The homeobox; TALE-type DNA-binding region spans 141–203 (GSSRRKNATR…NARRRLKKEN (63 aa)). The interval 203–246 (NKMTWPPRNKCSDEKRPYDEEEEEEEEEEDSQKATIKNEKKTVD) is disordered. Residues 221–232 (DEEEEEEEEEED) are compositionally biased toward acidic residues.

It belongs to the TALE/IRO homeobox family. Expressed in the neural plate in overlapping patterns with other irx members, which all share an anterior border of expression. At stage 20, expressed in a subset of cells in the developing hindbrain with expression appearing above the otic vesicle by stage 26. Expression in retina cells begins at stage 28, continuing at later stages and is limited to a subset of retinal cells of the optic cup. Also expressed in the ventricle of the heart from stage 36 (late tailbud) onwards. Only expressed in the pronephros at tadpole stage.

Its subcellular location is the nucleus. Its function is as follows. Acts partially redundantly with other irx members in neural patterning. Required for formation of the posterior forebrain, midbrain, hindbrain, and to a lesser extent, spinal cord. Patterns the neuroectoderm in both the anterior/posterior and dorsal/ventral axes. Does not appear to play a role in pronephros kidney development. In Xenopus laevis (African clawed frog), this protein is Iroquois-class homeodomain protein irx-4-A (irx4-a).